Reading from the N-terminus, the 121-residue chain is Ribonuclease P protein component (121 aa).

The protein belongs to the RnpA family. Consists of a catalytic RNA component (M1 or rnpB) and a protein subunit.

The enzyme catalyses Endonucleolytic cleavage of RNA, removing 5'-extranucleotides from tRNA precursor.. In terms of biological role, RNaseP catalyzes the removal of the 5'-leader sequence from pre-tRNA to produce the mature 5'-terminus. It can also cleave other RNA substrates such as 4.5S RNA. The protein component plays an auxiliary but essential role in vivo by binding to the 5'-leader sequence and broadening the substrate specificity of the ribozyme. This chain is Ribonuclease P protein component, found in Neisseria meningitidis serogroup B (strain ATCC BAA-335 / MC58).